Here is a 725-residue protein sequence, read N- to C-terminus: MSEDTVPEAASPPPSQGQHYFDRFSEDDPEYLRLRNRAADLRQDFNLMEQKKRVTMILQSPSFREELEGLIQEQMKKGNNSSNIWALRQIADFMASTSHAVFPASSMNFSMMTPINDLHTADSLNLAKGERLMRCKISSVYRLLDLYGWAQLSDTYVTLRVSKEQDHFLISPKGVSCSEVTASSLIKVNILGEVVEKGSSCFPVDTTGFSLHSAIYAARPDVRCAIHLHTPATAAVSAMKCGLLPVSHNALLVGDMAYYDFNGEMEQEADRINLQKCLGPTCKILVLRNHGMVALGDTVEEAFYKVFHLQAACEVQVSALSSAGGTENLILLEQEKHRPHEVGSVQWAGSTFGPMQKSRLGEHEFEALMRMLDNLGYRTGYTYRHPFVQEKTKHKSEVEIPATVTAFVFEEDGVPVPALRQHAQKQQKEKTRWLNTPNTYLRVNVADEVQRNMGSPRPKTTWMKADEVEKSSSGMPIRIENPNQFVPLYTDPQEVLDMRNKIREQNRQDIKSAGPQSQLLASVIAEKSRSPSTESQLMSKGDADTKDESEETVPNPFSQLTDQELEEYKKEVERKKLEQEQEGEKDIATEKPGSPVKSTPASPVQSPSKAGTKSPAVSPSKTSEDTKKTEVSEANTEPEPVKPEGLVVNGKEEEPSVEEALSKGLGQMTTNADTDGDSYKDKTESVTSGPLSPEGSPSKSPSKKKKKFRTPSFLKKSKKKEKVES.

The tract at residues 1-22 (MSEDTVPEAASPPPSQGQHYFD) is disordered. A phosphoserine mark is found at Ser-11 and Ser-25. At Thr-55 the chain carries Phosphothreonine. 2 positions are modified to phosphoserine: Ser-60 and Ser-344. The tract at residues 425–444 (KQQKEKTRWLNTPNTYLRVN) is interaction with calmodulin. A disordered region spans residues 525–725 (AEKSRSPSTE…KSKKKEKVES (201 aa)). Ser-530 and Ser-532 each carry phosphoserine. The residue at position 533 (Thr-533) is a Phosphothreonine. Ser-535 carries the post-translational modification Phosphoserine. Position 561 is a phosphothreonine (Thr-561). Positions 566 to 589 (EEYKKEVERKKLEQEQEGEKDIAT) are enriched in basic and acidic residues. Ser-594, Ser-598, Ser-602, and Ser-606 each carry phosphoserine. Residues 596–621 (VKSTPASPVQSPSKAGTKSPAVSPSK) are compositionally biased toward polar residues. Thr-612 carries the post-translational modification Phosphothreonine. Phosphoserine is present on residues Ser-614, Ser-618, and Ser-620. Positions 622–631 (TSEDTKKTEV) are enriched in basic and acidic residues. Thr-674 is modified (phosphothreonine). 9 positions are modified to phosphoserine: Ser-678, Ser-685, Ser-688, Ser-692, Ser-696, Ser-698, Ser-700, Ser-702, and Ser-712. Residues 687-700 (TSGPLSPEGSPSKS) are compositionally biased toward low complexity. The span at 701-725 (PSKKKKKFRTPSFLKKSKKKEKVES) shows a compositional bias: basic residues. The segment at 703-720 (KKKKKFRTPSFLKKSKKK) is interaction with calmodulin.

This sequence belongs to the aldolase class II family. Adducin subfamily. In terms of assembly, found in a complex with ADD2, DMTN and SLC2A1. Interacts with SLC2A1. Heterodimer of an alpha and a beta subunit.

Its subcellular location is the cytoplasm. It is found in the cytoskeleton. The protein resides in the cell membrane. Its function is as follows. Membrane-cytoskeleton-associated protein that promotes the assembly of the spectrin-actin network. Binds to the erythrocyte membrane receptor SLC2A1/GLUT1 and may therefore provide a link between the spectrin cytoskeleton to the plasma membrane. Binds to calmodulin. Calmodulin binds preferentially to the beta subunit. The sequence is that of Beta-adducin (Add2) from Mus musculus (Mouse).